A 391-amino-acid chain; its full sequence is Heme A synthase (391 aa).

Transmembrane regions (helical) follow at residues 37-57 (IRLW…VGGL), 121-141 (RQLG…FLAA), 152-172 (LLAL…MVAS), 186-206 (LATH…QALL), 229-249 (TTVL…VAGI), 298-318 (FLHR…WIFG), 332-352 (LLAM…LSAA), and 354-374 (WQVA…ILHA). His-300 is a heme binding site. Residue His-360 participates in heme binding.

It belongs to the COX15/CtaA family. Type 2 subfamily. In terms of assembly, interacts with CtaB. Requires heme b as cofactor.

It localises to the cell membrane. The catalysed reaction is Fe(II)-heme o + 2 A + H2O = Fe(II)-heme a + 2 AH2. It participates in porphyrin-containing compound metabolism; heme A biosynthesis; heme A from heme O: step 1/1. Its function is as follows. Catalyzes the conversion of heme O to heme A by two successive hydroxylations of the methyl group at C8. The first hydroxylation forms heme I, the second hydroxylation results in an unstable dihydroxymethyl group, which spontaneously dehydrates, resulting in the formyl group of heme A. The protein is Heme A synthase of Cereibacter sphaeroides (strain ATCC 17023 / DSM 158 / JCM 6121 / CCUG 31486 / LMG 2827 / NBRC 12203 / NCIMB 8253 / ATH 2.4.1.) (Rhodobacter sphaeroides).